A 326-amino-acid chain; its full sequence is Target of rapamycin complex subunit LST8 (326 aa).

At Met-1 the chain carries N-acetylmethionine. WD repeat units lie at residues 1–37 (MNTSPGTVGSDPVILATAGYDHTVRFWQAHSGICTRT), 40–80 (HQDS…PIIS), 83–122 (GVNKNVASVGFHEDGRWMYTGGEDCTARIWDLRSRNLQCQ), 126–165 (QVNAPINCVCLHPNQAELIVGDQSGAIHIWDLKTDHNEQL), and 168–207 (EPEVSITSAHIDPDASYMAAVNSTGNCYVWNLTGGIGDEV). The residue at position 51 (Thr-51) is a Phosphothreonine. A Glycyl lysine isopeptide (Lys-Gly) (interchain with G-Cter in SUMO3) cross-link involves residue Lys-86. Glycyl lysine isopeptide (Lys-Gly) (interchain with G-Cter in SUMO3) cross-links involve residues Lys-215, Lys-245, and Lys-261. The stretch at 218–257 (AHTRYALQCRFSPDSTLLATCSADQTCKIWRTSNFSLMTE) is one WD 6 repeat. Residues 268–309 (SSRGWMWGCAFSGDSQYIVTASSDNLARLWCVETGEIKREYG) form a WD 7 repeat. Lys-305 is covalently cross-linked (Glycyl lysine isopeptide (Lys-Gly) (interchain with G-Cter in SUMO3); alternate). Glycyl lysine isopeptide (Lys-Gly) (interchain with G-Cter in ubiquitin); alternate cross-links involve residues Lys-305 and Lys-313. Lys-313 participates in a covalent cross-link: Glycyl lysine isopeptide (Lys-Gly) (interchain with G-Cter in SUMO1); alternate.

Belongs to the WD repeat LST8 family. As to quaternary structure, part of the mechanistic target of rapamycin complex 1 (mTORC1) which contains MTOR, MLST8 and RPTOR. mTORC1 associates with AKT1S1/PRAS40, which inhibits its activity. mTORC1 binds to and is inhibited by FKBP12-rapamycin. Within mTORC1, interacts directly with MTOR and RPTOR. Component of the mechanistic target of rapamycin complex 2 (mTORC2), consisting in two heterotretramers composed of MTOR, MLST8, RICTOR and MAPKAP1/SIN1. Contrary to mTORC1, mTORC2 does not bind to and is not sensitive to FKBP12-rapamycin. mTORC1 and mTORC2 associate with DEPTOR, which regulates their activity. Interacts with RHEB. Interacts with MEAK7. Interacts with SIK3. Interacts with SLC38A7; this interaction promotes the recruitment of mTORC1 to the lysosome and its subsequent activation. In terms of processing, phosphorylation at Thr-51 by CDK1 promotes ubiquitination by the SCF(FBXW7) complex, followed by degradation. Post-translationally, ubiquitination by the SCF(FBXW7) and SCF(FBXW11) complexes following phosphorylation at Thr-51 by CDK1, leads to its degradation by the proteasome. Ubiquitination at Lys-305 and Lys-313 by TRAF2 via 'Lys-63'-linked polyubiquitin chains inhibits formation of the mTORC2 complex, while promoting formation of the mTORC1 complex: ubiquitination disrupts the interaction between MLST8 and MAPKAP1/SIN1 to favor mTORC1 assembly. Deubiquitination at Lys-305 and Lys-313 by OTUD7B promotes MLST8 interaction with MAPKAP1/SIN1, facilitating mTORC2 assembly. Sumoylation with SUMO1, SUMO2 and SUMO3 promotes assembly of both mTORC1 and mTORC2 complexes.

It is found in the lysosome membrane. It localises to the cytoplasm. Functionally, subunit of both mTORC1 and mTORC2, which regulates cell growth and survival in response to nutrient and hormonal signals. mTORC1 is activated in response to growth factors or amino acids. In response to nutrients, mTORC1 is recruited to the lysosome membrane and promotes protein, lipid and nucleotide synthesis by phosphorylating several substrates, such as ribosomal protein S6 kinase (RPS6KB1 and RPS6KB2) and EIF4EBP1 (4E-BP1). In the same time, it inhibits catabolic pathways by phosphorylating the autophagy initiation components ULK1 and ATG13, as well as transcription factor TFEB, a master regulators of lysosomal biogenesis and autophagy. The mTORC1 complex is inhibited in response to starvation and amino acid depletion. Within mTORC1, MLST8 interacts directly with MTOR and enhances its kinase activity. In nutrient-poor conditions, stabilizes the MTOR-RPTOR interaction and favors RPTOR-mediated inhibition of MTOR activity. As part of the mTORC2 complex, transduces signals from growth factors to pathways involved in proliferation, cytoskeletal organization, lipogenesis and anabolic output. mTORC2 is also activated by growth factors, but seems to be nutrient-insensitive. In response to growth factors, mTORC2 phosphorylates and activates AGC protein kinase family members, including AKT (AKT1, AKT2 and AKT3), PKC (PRKCA, PRKCB and PRKCE) and SGK1. mTORC2 functions upstream of Rho GTPases to regulate the actin cytoskeleton, probably by activating one or more Rho-type guanine nucleotide exchange factors. mTORC2 promotes the serum-induced formation of stress-fibers or F-actin. mTORC2 plays a critical role in AKT1 activation by mediating phosphorylation of different sites depending on the context, such as 'Thr-450', 'Ser-473', 'Ser-477' or 'Thr-479', facilitating the phosphorylation of the activation loop of AKT1 on 'Thr-308' by PDPK1/PDK1 which is a prerequisite for full activation. mTORC2 regulates the phosphorylation of SGK1 at 'Ser-422'. mTORC2 also modulates the phosphorylation of PRKCA on 'Ser-657'. Within mTORC2, MLST8 acts as a bridge between MAPKAP1/SIN1 and MTOR. The chain is Target of rapamycin complex subunit LST8 from Bos taurus (Bovine).